We begin with the raw amino-acid sequence, 155 residues long: 6,7-dimethyl-8-ribityllumazine synthase (155 aa).

Residues Phe23, 57–59 (AFE), and 83–85 (AVI) each bind 5-amino-6-(D-ribitylamino)uracil. 88–89 (AT) is a (2S)-2-hydroxy-3-oxobutyl phosphate binding site. His91 acts as the Proton donor in catalysis. Residue Phe114 coordinates 5-amino-6-(D-ribitylamino)uracil. Position 128 (Arg128) interacts with (2S)-2-hydroxy-3-oxobutyl phosphate.

Belongs to the DMRL synthase family.

The enzyme catalyses (2S)-2-hydroxy-3-oxobutyl phosphate + 5-amino-6-(D-ribitylamino)uracil = 6,7-dimethyl-8-(1-D-ribityl)lumazine + phosphate + 2 H2O + H(+). It participates in cofactor biosynthesis; riboflavin biosynthesis; riboflavin from 2-hydroxy-3-oxobutyl phosphate and 5-amino-6-(D-ribitylamino)uracil: step 1/2. In terms of biological role, catalyzes the formation of 6,7-dimethyl-8-ribityllumazine by condensation of 5-amino-6-(D-ribitylamino)uracil with 3,4-dihydroxy-2-butanone 4-phosphate. This is the penultimate step in the biosynthesis of riboflavin. This chain is 6,7-dimethyl-8-ribityllumazine synthase, found in Leptospira biflexa serovar Patoc (strain Patoc 1 / Ames).